A 596-amino-acid chain; its full sequence is Interleukin-1 receptor-associated kinase 3 (596 aa).

The 66-residue stretch at 41–106 (WRGLAERLSS…RAIHLITNYG (66 aa)) folds into the Death domain. Serine 110 bears the Phosphoserine; by IRAK1 mark. The Protein kinase domain maps to 165–452 (FHKDFLIGEG…LESTQASLYF (288 aa)). ATP-binding positions include 171–179 (IGEGEIFEV), lysine 192, 295–298 (SSAN), and aspartate 311. Residue serine 467 is modified to Phosphoserine. The interval 560–596 (NIDPSSEAPGHSCRSRPVESSCSSKFSWDEYEQYKKE) is disordered.

Belongs to the protein kinase superfamily. TKL Ser/Thr protein kinase family. Pelle subfamily. Monomer. Homodimer; disulfide-linked. May interact with IRAK4 (when phosphorylated). Interacts (when phosphorylated at Ser-110) with PIN1 (via WW domain) in response to IL33-mediated (but not TLR4 ligand LPS) dendritic cell stimulation. In terms of tissue distribution, expressed in eosinophils, dendritic cells and/or monocytes (at protein level). Expressed predominantly in peripheral blood lymphocytes.

The protein localises to the cytoplasm. It is found in the nucleus. In terms of biological role, putative inactive protein kinase which regulates signaling downstream of immune receptors including IL1R and Toll-like receptors. Inhibits dissociation of IRAK1 and IRAK4 from the Toll-like receptor signaling complex by either inhibiting the phosphorylation of IRAK1 and IRAK4 or stabilizing the receptor complex. Upon IL33-induced lung inflammation, positively regulates expression of IL6, CSF3, CXCL2 and CCL5 mRNAs in dendritic cells. This chain is Interleukin-1 receptor-associated kinase 3, found in Homo sapiens (Human).